The sequence spans 145 residues: Protein X (145 aa).

The segment at 68–117 (PCALRFTSARRMETTVNAHQVLPKVLHKRTLGLSAMSTTDLEAYFKDCVF) is mitochondrial targeting sequence.

The protein belongs to the orthohepadnavirus protein X family. As to quaternary structure, may form homodimer. May interact with host CEBPA, CFLAR, CREB1, DDB1, E4F1, HBXIP, HSPD1/HSP60, NFKBIA, POLR2E and SMAD4. Interacts with host SMC5-SMC6 complex and induces its degradation. Interacts with host TRPC4AP; leading to prevent ubiquitination of TRPC4AP. Interacts with host PLSCR1; this interaction promotes ubiquitination and degradation of HBx and impairs HBx-mediated cell proliferation. A fraction may be phosphorylated in insect cells and HepG2 cells, a human hepatoblastoma cell line. Phosphorylated in vitro by host protein kinase C or mitogen-activated protein kinase. N-acetylated in insect cells.

Its subcellular location is the host cytoplasm. The protein localises to the host nucleus. It is found in the host mitochondrion. Multifunctional protein that plays a role in silencing host antiviral defenses and promoting viral transcription. Does not seem to be essential for HBV infection. May be directly involved in development of cirrhosis and liver cancer (hepatocellular carcinoma). Most of cytosolic activities involve modulation of cytosolic calcium. The effect on apoptosis is controversial depending on the cell types in which the studies have been conducted. May induce apoptosis by localizing in mitochondria and causing loss of mitochondrial membrane potential. May also modulate apoptosis by binding host CFLAR, a key regulator of the death-inducing signaling complex (DISC). Promotes viral transcription by using the host E3 ubiquitin ligase DDB1 to target the SMC5-SMC6 complex to proteasomal degradation. This host complex would otherwise bind to viral episomal DNA, and prevents its transcription. Moderately stimulates transcription of many different viral and cellular transcription elements. Promoters and enhancers stimulated by HBx contain DNA binding sites for NF-kappa-B, AP-1, AP-2, c-EBP, ATF/CREB, or the calcium-activated factor NF-AT. The chain is Protein X from Homo sapiens (Human).